Reading from the N-terminus, the 279-residue chain is NH(3)-dependent NAD(+) synthetase (279 aa).

ATP is bound at residue 40–47 (GLSGGIDS). Residue D46 coordinates Mg(2+). R122 provides a ligand contact to deamido-NAD(+). ATP is bound at residue T142. E147 lines the Mg(2+) pocket. Deamido-NAD(+) is bound by residues K155 and D162. ATP is bound by residues K171 and S193. 253 to 254 (HK) contacts deamido-NAD(+).

This sequence belongs to the NAD synthetase family. As to quaternary structure, homodimer.

It carries out the reaction deamido-NAD(+) + NH4(+) + ATP = AMP + diphosphate + NAD(+) + H(+). It functions in the pathway cofactor biosynthesis; NAD(+) biosynthesis; NAD(+) from deamido-NAD(+) (ammonia route): step 1/1. Functionally, catalyzes the ATP-dependent amidation of deamido-NAD to form NAD. Uses ammonia as a nitrogen source. The polypeptide is NH(3)-dependent NAD(+) synthetase (Sulfurisphaera tokodaii (strain DSM 16993 / JCM 10545 / NBRC 100140 / 7) (Sulfolobus tokodaii)).